Consider the following 222-residue polypeptide: Putative N-acetylmannosamine-6-phosphate 2-epimerase (222 aa).

The protein belongs to the NanE family.

It carries out the reaction an N-acyl-D-glucosamine 6-phosphate = an N-acyl-D-mannosamine 6-phosphate. It functions in the pathway amino-sugar metabolism; N-acetylneuraminate degradation; D-fructose 6-phosphate from N-acetylneuraminate: step 3/5. Functionally, converts N-acetylmannosamine-6-phosphate (ManNAc-6-P) to N-acetylglucosamine-6-phosphate (GlcNAc-6-P). This is Putative N-acetylmannosamine-6-phosphate 2-epimerase from Staphylococcus aureus (strain MSSA476).